We begin with the raw amino-acid sequence, 317 residues long: Acetyl-coenzyme A carboxylase carboxyl transferase subunit alpha (317 aa).

The 254-residue stretch at 40 to 293 (LEVRVREAIV…GDVIANALGE (254 aa)) folds into the CoA carboxyltransferase C-terminal domain.

This sequence belongs to the AccA family. As to quaternary structure, acetyl-CoA carboxylase is a heterohexamer composed of biotin carboxyl carrier protein (AccB), biotin carboxylase (AccC) and two subunits each of ACCase subunit alpha (AccA) and ACCase subunit beta (AccD).

It is found in the cytoplasm. The catalysed reaction is N(6)-carboxybiotinyl-L-lysyl-[protein] + acetyl-CoA = N(6)-biotinyl-L-lysyl-[protein] + malonyl-CoA. It functions in the pathway lipid metabolism; malonyl-CoA biosynthesis; malonyl-CoA from acetyl-CoA: step 1/1. Its function is as follows. Component of the acetyl coenzyme A carboxylase (ACC) complex. First, biotin carboxylase catalyzes the carboxylation of biotin on its carrier protein (BCCP) and then the CO(2) group is transferred by the carboxyltransferase to acetyl-CoA to form malonyl-CoA. In Rhizobium leguminosarum bv. trifolii (strain WSM2304), this protein is Acetyl-coenzyme A carboxylase carboxyl transferase subunit alpha.